The chain runs to 520 residues: MELSWETKSAIILITVTFGLVYAWRVLNWMWLKPKKIEKLLREQGLQGNPYRLLLGDAKDYFVMQKKVQSKPMNLSDDIAPRVAPYIHHAVQTHGKKSFIWFGMKPWVILNEPEQIREVFNKMSEFPKVQYKFMKLITRGLVKLEGEKWSKHRRIINPAFHMEKLKIMTPTFLKSCNDLISNWEKMLSSNGSCEMDVWPSLQSLTSDVIARSSFGSSYEEGRKVFQLQIEQGELIMKNLMKSLIPLWRFLPTADHRKINENEKQIETTLKNIINKREKAIKAGEATENDLLGLLLESNHREIKEHGNVKNMGLSLEEVVGECRLFHVAGQETTSDLLVWTMVLLSRYPDWQERARKEVLEIFGNEKPDFDGLNKLKIMAMILYEVLRLYPPVTGVARKVENDIKLGDLTLYAGMEVYMPIVLIHHDCELWGDDAKIFNPERFSGGISKATNGRFSYFPFGAGPRICIGQNFSLLEAKMAMALILKNFSFELSQTYAHAPSVVLSVQPQHGAHVILRKIKT.

A helical membrane pass occupies residues 11-31 (IILITVTFGLVYAWRVLNWMW). C466 contacts heme.

Belongs to the cytochrome P450 family. Heme is required as a cofactor.

It is found in the membrane. It catalyses the reaction oleanolate + 3 reduced [NADPH--hemoprotein reductase] + 3 O2 = gypsogenate + 3 oxidized [NADPH--hemoprotein reductase] + 4 H2O + 4 H(+). Functionally, catalyzes the carboxylation of oleanolic acid at the C-23 position to form gypsogenic acid. Involved in the hemolytic saponin biosynthetic pathway. The chain is Cytochrome P450 72A68 from Medicago truncatula (Barrel medic).